The chain runs to 263 residues: Superoxide dismutase [Fe] 3, chloroplastic (263 aa).

The N-terminal 41 residues, 1–41, are a transit peptide targeting the chloroplast; the sequence is MSSCVVTTSCFYTISDSSIRLKSPKLLNLSNQQRRRSLRSR. Fe cation-binding residues include His74, His127, Asp211, and His215.

The protein belongs to the iron/manganese superoxide dismutase family. In terms of assembly, homodimer. Heterodimer with FSD2. Interacts with MRL7. Fe cation serves as cofactor.

It localises to the plastid. It is found in the chloroplast thylakoid. It carries out the reaction 2 superoxide + 2 H(+) = H2O2 + O2. Its activity is regulated as follows. Activated by cpn20/cpn21 (in vitro). Functionally, destroys superoxide anion radicals which are normally produced within the cells and which are toxic to biological systems. Plays important role in chloroplast development, particularly in the maintenance of thylakoids membranes. Seems to act as a heterodimer with FSD2. The sequence is that of Superoxide dismutase [Fe] 3, chloroplastic from Arabidopsis thaliana (Mouse-ear cress).